The following is a 354-amino-acid chain: Uroporphyrinogen decarboxylase (354 aa).

Substrate-binding positions include 27 to 31 (RQAGR), Asp-77, Tyr-153, Thr-208, and His-326.

The protein belongs to the uroporphyrinogen decarboxylase family. As to quaternary structure, homodimer.

It is found in the cytoplasm. It catalyses the reaction uroporphyrinogen III + 4 H(+) = coproporphyrinogen III + 4 CO2. The protein operates within porphyrin-containing compound metabolism; protoporphyrin-IX biosynthesis; coproporphyrinogen-III from 5-aminolevulinate: step 4/4. Catalyzes the decarboxylation of four acetate groups of uroporphyrinogen-III to yield coproporphyrinogen-III. In Neisseria gonorrhoeae (strain NCCP11945), this protein is Uroporphyrinogen decarboxylase.